The chain runs to 215 residues: UPF0126 membrane protein DR_2368 (215 aa).

6 consecutive transmembrane segments (helical) span residues 15 to 35 (LHWL…LLGV), 39 to 59 (FDLF…GAIR), 75 to 95 (TYLW…ERLA), 101 to 121 (LSLF…LGAI), 123 to 143 (IGLG…GGGI), and 162 to 182 (LYAT…PHFT).

The protein belongs to the UPF0126 family.

The protein resides in the cell membrane. The polypeptide is UPF0126 membrane protein DR_2368 (Deinococcus radiodurans (strain ATCC 13939 / DSM 20539 / JCM 16871 / CCUG 27074 / LMG 4051 / NBRC 15346 / NCIMB 9279 / VKM B-1422 / R1)).